The chain runs to 839 residues: Katanin p80 WD40 repeat-containing subunit B1 homolog KTN80.3 (839 aa).

WD repeat units follow at residues 14 to 54 (AHSA…AILS), 57 to 96 (GHSSGIDSVTFDASEGLVAAGAASGTIKLWDLEEAKVVRT), 99 to 138 (GHRSNCVSVNFHPFGEFFASGSLDTNLKIWDIRKKGCIHT), 141 to 182 (GHTR…HEFK), 184 to 222 (HEGKIQSLDFHPHEFLLATGSADKTVKFWDLETFELIGS), 225 to 265 (TETT…DGVD), and 267 to 304 (GWSNLSDMNVHEGKLLGCSYNQNCVGVWVVDLSRTEPM). The short motif at 115 to 131 (FFASGSLDTNLKIWDIR) is the DWD box element. Disordered stretches follow at residues 303–340 (PMSGGATQSNSHPEKTSGSGRDQAGLNDNSSKVILGKL), 357–435 (GKLS…KSAS), 501–561 (LQSK…RTNK), and 575–648 (SLVR…PSNM). Composition is skewed to polar residues over residues 307–334 (GATQSNSHPEKTSGSGRDQAGLNDNSSK), 375–385 (TGRSSVSQSSD), 411–435 (TLSSTGSVSDSPHRVTLTSAPKSAS), 501–533 (LQSKAADSRRLSSSRNEPDLPTSSLLERSQSQP), 589–602 (DLISYNANRDSSPT), and 630–648 (VSSSSGGNMTAPNSRPSNM).

The protein belongs to the WD repeat KATNB1 family. As to quaternary structure, component of KTN80-KTN1 complexes composed of a hexamer of KTN1-KTN80 heterodimers that sense microtubule (MT) geometry to confer precise MT severing. Interacts directly with AAA1/KTN1 and KTN80.1, and weakly with KTN80.4. Expressed in siliques, flowers, leaves, stems and roots.

The protein resides in the cytoplasm. It localises to the cytoskeleton. May participate in a complex which severs microtubules in an ATP-dependent manner. Microtubule severing may promote rapid reorganization of cellular microtubule arrays. Confers precision to microtubule (MT) severing by specific targeting of KTN1 to MT cleavage sites such as crossover or branching nucleation sites. Together with other KTN80s, regulates cell elongation by modulating MT organization. This is Katanin p80 WD40 repeat-containing subunit B1 homolog KTN80.3 from Arabidopsis thaliana (Mouse-ear cress).